Here is a 122-residue protein sequence, read N- to C-terminus: Large ribosomal subunit protein uL18 (122 aa).

The protein belongs to the universal ribosomal protein uL18 family. As to quaternary structure, part of the 50S ribosomal subunit; part of the 5S rRNA/L5/L18/L25 subcomplex. Contacts the 5S and 23S rRNAs.

In terms of biological role, this is one of the proteins that bind and probably mediate the attachment of the 5S RNA into the large ribosomal subunit, where it forms part of the central protuberance. This is Large ribosomal subunit protein uL18 from Leptospira biflexa serovar Patoc (strain Patoc 1 / Ames).